Here is a 436-residue protein sequence, read N- to C-terminus: UDP-glucuronate 4-epimerase 5 (436 aa).

Helical transmembrane passes span 36 to 56 and 95 to 115; these read LTLW…LSPP and GLTV…SIAL. 97–128 is a binding site for NAD(+); sequence TVLVTGASGFVGTHVSIALRRRGDGVLGLDNF. The Proton acceptor role is filled by Tyr247.

The protein belongs to the NAD(P)-dependent epimerase/dehydratase family. Homodimer. In leaves, pollen and siliques, but not in roots or flowers.

It localises to the golgi apparatus. It is found in the golgi stack membrane. The catalysed reaction is UDP-alpha-D-glucuronate = UDP-alpha-D-galacturonate. Involved in the synthesis of the negatively charged monosaccharide that forms the backbone of pectic cell wall components. The polypeptide is UDP-glucuronate 4-epimerase 5 (GAE5) (Arabidopsis thaliana (Mouse-ear cress)).